A 502-amino-acid polypeptide reads, in one-letter code: Probable cytosol aminopeptidase (502 aa).

Mn(2+) contacts are provided by lysine 269 and aspartate 274. Residue lysine 281 is part of the active site. 3 residues coordinate Mn(2+): aspartate 292, aspartate 351, and glutamate 353. Residue arginine 355 is part of the active site.

The protein belongs to the peptidase M17 family. Mn(2+) is required as a cofactor.

The protein resides in the cytoplasm. The catalysed reaction is Release of an N-terminal amino acid, Xaa-|-Yaa-, in which Xaa is preferably Leu, but may be other amino acids including Pro although not Arg or Lys, and Yaa may be Pro. Amino acid amides and methyl esters are also readily hydrolyzed, but rates on arylamides are exceedingly low.. It catalyses the reaction Release of an N-terminal amino acid, preferentially leucine, but not glutamic or aspartic acids.. Functionally, presumably involved in the processing and regular turnover of intracellular proteins. Catalyzes the removal of unsubstituted N-terminal amino acids from various peptides. The sequence is that of Probable cytosol aminopeptidase from Vibrio campbellii (strain ATCC BAA-1116).